The chain runs to 166 residues: Myosin regulatory light chain 2, ventricular/cardiac muscle isoform (166 aa).

S2 is modified (n,N,N-trimethylserine). N14 carries the post-translational modification Deamidated asparagine. Residue S19 is modified to Phosphoserine. EF-hand domains lie at 24–59, 94–129, and 130–165; these read TQIQ…LGRV, DPEE…QAER, and FSKE…GEEK. The Ca(2+) site is built by D37, N39, D41, and D48. T52 carries the post-translational modification Phosphothreonine.

Myosin is a hexamer of 2 heavy chains and 4 light chains. Interacts with MYOC. In terms of processing, N-terminus is methylated by METTL11A/NTM1. Post-translationally, phosphorylated by MYLK3 and MYLK2; promotes cardiac muscle contraction and function. Dephosphorylated by PPP1CB complexed to PPP1R12B. The phosphorylated form in adult is expressed as gradients across the heart from endocardium (low phosphorylation) to epicardium (high phosphorylation); regulates cardiac torsion and workload distribution.

Its subcellular location is the cytoplasm. It localises to the myofibril. The protein localises to the sarcomere. It is found in the a band. Functionally, contractile protein that plays a role in heart development and function. Following phosphorylation, plays a role in cross-bridge cycling kinetics and cardiac muscle contraction by increasing myosin lever arm stiffness and promoting myosin head diffusion; as a consequence of the increase in maximum contraction force and calcium sensitivity of contraction force. These events altogether slow down myosin kinetics and prolong duty cycle resulting in accumulated myosins being cooperatively recruited to actin binding sites to sustain thin filament activation as a means to fine-tune myofilament calcium sensitivity to force. During cardiogenesis plays an early role in cardiac contractility by promoting cardiac myofibril assembly. The sequence is that of Myosin regulatory light chain 2, ventricular/cardiac muscle isoform from Bos taurus (Bovine).